Reading from the N-terminus, the 202-residue chain is Small ribosomal subunit protein uS4 (202 aa).

The segment covering 1 to 13 has biased composition (basic residues); that stretch reads MSRYRGPRLRVTR. Positions 1–42 are disordered; it reads MSRYRGPRLRVTRRLGELPGLTRKASKKSNPPGQHGQARRKR. Residues 90–152 enclose the S4 RNA-binding domain; sequence NRLDNVCFRL…KASKKLVEGN (63 aa).

This sequence belongs to the universal ribosomal protein uS4 family. Part of the 30S ribosomal subunit. Contacts protein S5. The interaction surface between S4 and S5 is involved in control of translational fidelity.

Its function is as follows. One of the primary rRNA binding proteins, it binds directly to 16S rRNA where it nucleates assembly of the body of the 30S subunit. In terms of biological role, with S5 and S12 plays an important role in translational accuracy. The protein is Small ribosomal subunit protein uS4 of Prochlorococcus marinus subsp. pastoris (strain CCMP1986 / NIES-2087 / MED4).